Consider the following 140-residue polypeptide: uncharacterized protein (140 aa).

4 helical membrane passes run 4-24, 56-76, 84-104, and 109-129; these read LLLAGWIFFILLSVCTESFSG, EAFIQKIGHAFSFFVLTYLLW, SAAAGSFAFAFFTEVLQLFFS, and IRDVLIDAVGIGLFYGLYVLA.

It is found in the cell membrane. Its function is as follows. May be important for peptidoglycan remodeling. This is an uncharacterized protein from Bacillus subtilis (strain 168).